Consider the following 829-residue polypeptide: Telomere length regulation protein TEL2 homolog (829 aa).

Disordered regions lie at residues serine 446 to valine 493 and serine 620 to isoleucine 641. Over residues serine 456–proline 466 the composition is skewed to low complexity. Basic and acidic residues predominate over residues glutamate 467 to glutamine 480. Positions serine 482 to valine 493 are enriched in acidic residues. The segment covering alanine 629–isoleucine 641 has biased composition (polar residues).

This sequence belongs to the TEL2 family.

The protein resides in the cytoplasm. It localises to the membrane. Its subcellular location is the nucleus. The protein localises to the chromosome. It is found in the telomere. Its function is as follows. Regulator of the DNA damage response (DDR). Part of the TTT complex that is required to stabilize protein levels of the phosphatidylinositol 3-kinase-related protein kinase (PIKK) family proteins. Promotes assembly, stabilizes and maintains the activity of TORC complexes, which regulate cell growth and survival in response to nutrient and hormonal signals. May be involved in telomere length regulation. This is Telomere length regulation protein TEL2 homolog (telo2) from Xenopus tropicalis (Western clawed frog).